A 4599-amino-acid polypeptide reads, in one-letter code: MSEFLLALLTLSGLLPIARVLTVGADRDQQLCDPGEFLCHDHVTCVSQSWLCDGDPDCPDDSDESLDTCPEEVEIKCPLNHIACLGTNKCVHLSQLCNGVLDCPDGYDEGVHCQELLSNCQQLNCQYKCTMVRNSTRCYCEDGFEITEDGRSCKDQDECAVYGTCSQTCRNTHGSYTCSCVEGYLMQPDNRSCKAKIEPTDRPPILLIANFETIEVFYLNGSKMATLSSVNGNEIHTLDFIYNEDMICWIESRESSNQLKCIQITKAGGLTDEWTINILQSFHNVQQMAIDWLTRNLYFVDHVGDRIFVCNSNGSVCVTLIDLELHNPKAIAVDPIAGKLFFTDYGNVAKVERCDMDGMNRTRIIDSKTEQPAALALDLVNKLVYWVDLYLDYVGVVDYQGKNRHTVIQGRQVRHLYGITVFEDYLYATNSDNYNIVRINRFNGTDIHSLIKIENAWGIRIYQKRTQPTVRSHACEVDPYGMPGGCSHICLLSSSYKTRTCRCRTGFNLGSDGRSCKRPKNELFLFYGKGRPGIVRGMDLNTKIADEYMIPIENLVNPRALDFHAETNYIYFADTTSFLIGRQKIDGTERETILKDDLDNVEGIAVDWIGNNLYWTNDGHRKTINVARLEKASQSRKTLLEGEMSHPRGIVVDPVNGWMYWTDWEEDEIDDSVGRIEKAWMDGFNRQIFVTSKMLWPNGLTLDFHTNTLYWCDAYYDHIEKVFLNGTHRKIVYSGRELNHPFGLSHHGNYVFWTDYMNGSIFQLDLITSEVTLLRHERPPLFGLQIYDPRKQQGDNMCRVNNGGCSTLCLAIPGGRVCACADNQLLDENGTTCTFNPGEALPHICKAGEFRCKNRHCIQARWKCDGDDDCLDGSDEDSVNCFNHSCPDDQFKCQNNRCIPKRWLCDGANDCGSNEDESNQTCTARTCQVDQFSCGNGRCIPRAWLCDREDDCGDQTDEMASCEFPTCEPLTQFVCKSGRCISSKWHCDSDDDCGDGSDEVGCVHSCFDNQFRCSSGRCIPGHWACDGDNDCGDFSDEAQINCTKEEIHSPAGCNGNEFQCHPDGNCVPDLWRCDGEKDCEDGSDEKGCNGTIRLCDHKTKFSCWSTGRCINKAWVCDGDIDCEDQSDEDDCDSFLCGPPKHPCANDTSVCLQPEKLCNGKKDCPDGSDEGYLCDECSLNNGGCSNHCSVVPGRGIVCSCPEGLQLNKDNKTCEIVDYCSNHLKCSQVCEQHKHTVKCSCYEGWKLDVDGESCTSVDPFEAFIIFSIRHEIRRIDLHKRDYSLLVPGLRNTIALDFHFNQSLLYWTDVVEDRIYRGKLSESGGVSAIEVVVEHGLATPEGLTVDWIAGNIYWIDSNLDQIEVAKLDGSLRTTLIAGAMEHPRAIALDPRYGILFWTDWDANFPRIESASMSGAGRKTIYKDMKTGAWPNGLTVDHFEKRIVWTDARSDAIYSALYDGTNMIEIIRGHEYLSHPFAVSLYGSEVYWTDWRTNTLSKANKWTGQNVSVIQKTSAQPFDLQIYHPSRQPQAPNPCAANDGKGPCSHMCLINHNRSAACACPHLMKLSSDKKTCYEMKKFLLYARRSEIRGVDIDNPYFNFITAFTVPDIDDVTVIDFDASEERLYWTDIKTQTIKRAFINGTGLETVISRDIQSIRGLAVDWVSRNLYWISSEFDETQINVARLDGSLKTSIIHGIDKPQCLAAHPVRGKLYWTDGNTINMANMDGSNSKILFQNQKEPVGLSIDYVENKLYWISSGNGTINRCNLDGGNLEVIESMKEELTKATALTIMDKKLWWADQNLAQLGTCSKRDGRNPTILRNKTSGVVHMKVYDKEAQQGSNSCQLNNGGCSQLCLPTSETTRTCMCTVGYYLQKNRMSCQGIESFLMYSVHEGIRGIPLEPSDKMDALMPISGTSFAVGIDFHAENDTIYWTDMGFNKISRAKRDQTWKEDIITNGLGRVEGIAVDWIAGNIYWTDHGFNLIEVARLNGSFRYVIISQGLDQPRSIAVHPEKGLLFWTEWGQMPCIGKARLDGSEKVVLVSMGIAWPNGISIDYEENKLYWCDARTDKIERIDLETGGNREMVLSGSNVDMFSVAVFGAYIYWSDRAHANGSVRRGHKNDATETITMRTGLGVNLKEVKIFNRVREKGTNVCARDNGGCKQLCLYRGNSRRTCACAHGYLAEDGVTCLRHEGYLLYSGRTILKSIHLSDETNLNSPIRPYENPRYFKNVIALAFDYNQRRKGTNRIFYSDAHFGNIQLIKDNWEDRQVIVENVGSVEGLAYHRAWDTLYWTSSTTSSITRHTVDQTRPGAFDREAVITMSEDDHPHVLALDECQNLMFWTNWNEQHPSIMRSTLTGKNAQVVVSTDILTPNGLTIDYRAEKLYFSDGSLGKIERCEYDGSQRHVIVKSGPGTFLSLAVYDNYIFWSDWGRRAILRSNKYTGGDTKILRSDIPHQPMGIIAVANDTNSCELSPCALLNGGCHDLCLLTPNGRVNCSCRGDRILLEDNRCVTKNSSCNAYSEFECGNGECIDYQLTCDGIPHCKDKSDEKLLYCENRSCRRGFKPCYNRRCIPHGKLCDGENDCGDNSDELDCKVSTCATVEFRCADGTCIPRSARCNQNIDCADASDEKNCNNTDCTHFYKLGVKTTGFIRCNSTSLCVLPTWICDGSNDCGDYSDELKCPVQNKHKCEENYFSCPSGRCILNTWICDGQKDCEDGRDEFHCDSSCSWNQFACSAQKCISKHWICDGEDDCGDGLDESDSICGAITCAADMFSCQGSRACVPRHWLCDGERDCPDGSDELSTAGCAPNNTCDENAFMCHNKVCIPKQFVCDHDDDCGDGSDESPQCGYRQCGTEEFSCADGRCLLNTQWQCDGDFDCPDHSDEAPLNPKCKSAEQSCNSSFFMCKNGRCIPSGGLCDNKDDCGDGSDERNCHINECLSKKVSGCSQDCQDLPVSYKCKCWPGFQLKDDGKTCVDIDECSSGFPCSQQCINTYGTYKCLCTDGYEIQPDNPNGCKSLSDEEPFLILADHHEIRKISTDGSNYTLLKQGLNNVIAIDFDYREEFIYWIDSSRPNGSRINRMCLNGSDIKVVHNTAVPNALAVDWIGKNLYWSDTEKRIIEVSKLNGLYPTILVSKRLKFPRDLSLDPQAGYLYWIDCCEYPHIGRVGMDGTNQSVVIETKISRPMALTIDYVNRRLYWADENHIEFSNMDGSHRHKVPNQDIPGVIALTLFEDYIYWTDGKTKSLSRAHKTSGADRLSLIYSWHAITDIQVYHSYRQPDVSKHLCMINNGGCSHLCLLAPGKTHTCACPTNFYLAADNRTCLSNCTASQFRCKTDKCIPFWWKCDTVDDCGDGSDEPDDCPEFRCQPGRFQCGTGLCALPAFICDGENDCGDNSDELNCDTHVCLSGQFKCTKNQKCIPVNLRCNGQDDCGDEEDERDCPENSCSPDYFQCKTTKHCISKLWVCDEDPDCADASDEANCDKKTCGPHEFQCKNNNCIPDHWRCDSQNDCSDNSDEENCKPQTCTLKDFLCANGDCVSSRFWCDGDFDCADGSDERNCETSCSKDQFRCSNGQCIPAKWKCDGHEDCKYGEDEKSCEPASPTCSSREYICASDGCISASLKCNGEYDCADGSDEMDCVTECKEDQFRCKNKAHCIPIRWLCDGIHDCVDGSDEENCERGGNICRADEFLCNNSLCKLHFWVCDGEDDCGDNSDEAPDMCVKFLCPSTRPHRCRNNRICLQSEQMCNGIDECGDNSDEDHCGGKLTYKARPCKKDEFACSNKKCIPMDLQCDRLDDCGDGSDEQGCRIAPTEYTCEDNVNPCGDDAYCNQIKTSVFCRCKPGFQRNMKNRQCEDLNECLVFGTCSHQCINVEGSYKCVCDQNFQERNNTCIAEGSEDQVLYIANDTDILGFIYPFNYSGDHQQISHIEHNSRITGMDVYYQRDMIIWSTQFNPGGIFYKRIHGREKRQANSGLICPEFKRPRDIAVDWVAGNIYWTDHSRMHWFSYYTTHWTSLRYSINVGQLNGPNCTRLLTNMAGEPYAIAVNPKRGMMYWTVVGDHSHIEEAAMDGTLRRILVQKNLQRPTGLAVDYFSERIYWADFELSIIGSVLYDGSNSVVSVSSKQGLLHPHRIDIFEDYIYGAGPKNGVFRVQKFGHGSVEYLALNIDKTKGVLISHRYKQLDLPNPCLDLACEFLCLLNPSGATCVCPEGKYLINGTCNDDSLLDDSCKLTCENGGRCILNEKGDLRCHCWPSYSGERCEVNHCSNYCQNGGTCVPSVLGRPTCSCALGFTGPNCGKTVCEDFCQNGGTCIVTAGNQPYCHCQPEYTGDRCQYYVCHHYCVNSESCTIGDDGSVECVCPTRYEGPKCEVDKCVRCHGGHCIINKDSEDIFCNCTNGKIASSCQLCDGYCYNGGTCQLDPETNVPVCLCSTNWSGTQCERPAPKSSKSDHISTRSIAIIVPLVLLVTLITTLVIGLVLCKRKRRTKTIRRQPIINGGINVEIGNPSYNMYEVDHDHNDGGLLDPGFMIDPTKARYIGGGPSAFKLPHTAPPIYLNSDLKGPLTAGPTNYSNPVYAKLYMDGQNCRNSLGSVDERKELLPKKIEIGIRETVA.

The signal sequence occupies residues 1-20 (MSEFLLALLTLSGLLPIARV). Topologically, residues 25–4444 (ADRDQQLCDP…KSDHISTRSI (4420 aa)) are extracellular. LDL-receptor class A domains lie at 31–70 (LCDP…DTCP) and 76–114 (KCPL…VHCQ). 12 disulfides stabilise this stretch: C32–C45, C39–C58, C52–C69, C77–C90, C84–C103, C97–C113, C120–C129, C125–C138, C140–C153, C159–C169, C165–C178, and C180–C193. Residues 116–154 (LLSNCQQLNCQYKCTMVRNSTRCYCEDGFEITEDGRSCK) form the EGF-like 1 domain. N-linked (GlcNAc...) asparagine glycosylation occurs at N134. Positions 155 to 194 (DQDECAVYGTCSQTCRNTHGSYTCSCVEGYLMQPDNRSCK) constitute an EGF-like 2; calcium-binding domain. 4 N-linked (GlcNAc...) asparagine glycosylation sites follow: N190, N220, N313, and N360. 3 LDL-receptor class B repeats span residues 295 to 337 (RNLY…DPIA), 338 to 381 (GKLF…DLVN), and 382 to 425 (KLVY…FEDY). N-linked (GlcNAc...) asparagine glycosylation occurs at N443. One can recognise an EGF-like 3 domain in the interval 471-517 (RSHACEVDPYGMPGGCSHICLLSSSYKTRTCRCRTGFNLGSDGRSCK). LDL-receptor class B repeat units lie at residues 568-610 (NYIY…DWIG), 611-656 (NNLY…DPVN), 657-706 (GWMY…DFHT), and 707-750 (NTLY…HGNY). 2 N-linked (GlcNAc...) asparagine glycosylation sites follow: N725 and N758. In terms of domain architecture, EGF-like 4 spans 794 to 834 (GDNMCRVNNGGCSTLCLAIPGGRVCACADNQLLDENGTTCT). 6 cysteine pairs are disulfide-bonded: C798–C809, C805–C818, C820–C833, C845–C857, C852–C870, and C864–C881. A glycan (N-linked (GlcNAc...) asparagine) is linked at N829. Positions 844–882 (ICKAGEFRCKNRHCIQARWKCDGDDDCLDGSDEDSVNCF) constitute an LDL-receptor class A 3 domain. N883 carries N-linked (GlcNAc...) asparagine glycosylation. LDL-receptor class A domains follow at residues 885 to 923 (SCPD…QTCT), 926 to 963 (TCQV…ASCE), 966 to 1003 (TCEP…VGCV), 1005 to 1043 (SCFD…INCT), 1052 to 1089 (GCNG…KGCN), 1094 to 1132 (LCDH…DDCD), and 1135 to 1174 (LCGP…YLCD). Intrachain disulfides connect C886–C898, C893–C911, C905–C922, C927–C939, C934–C952, C946–C962, C967–C980, C975–C993, C987–C1002, C1006–C1018, C1013–C1031, C1025–C1042, C1053–C1066, C1060–C1079, and C1073–C1088. N919 is a glycosylation site (N-linked (GlcNAc...) asparagine). N-linked (GlcNAc...) asparagine glycosylation occurs at N1041. An N-linked (GlcNAc...) asparagine glycan is attached at N1089. 6 disulfides stabilise this stretch: C1095–C1109, C1103–C1122, C1116–C1131, C1136–C1150, C1143–C1163, and C1157–C1173. Residue N1145 is glycosylated (N-linked (GlcNAc...) asparagine). EGF-like domains are found at residues 1174-1213 (DECS…KTCE) and 1214-1253 (IVDY…ESCT). Residue N1209 is glycosylated (N-linked (GlcNAc...) asparagine). Residue N1298 is glycosylated (N-linked (GlcNAc...) asparagine). LDL-receptor class B repeat units follow at residues 1300–1346 (SLLY…DWIA), 1347–1389 (GNIY…DPRY), 1390–1436 (GILF…DHFE), 1437–1480 (KRIV…LYGS), and 1481–1522 (EVYW…YHPS). 3 N-linked (GlcNAc...) asparagine glycosylation sites follow: N1502, N1549, and N1636. The region spanning 1527–1570 (APNPCAANDGKGPCSHMCLINHNRSAACACPHLMKLSSDKKTCY) is the EGF-like 7 domain. 4 LDL-receptor class B repeats span residues 1618–1660 (ERLY…DWVS), 1661–1704 (RNLY…HPVR), 1705–1744 (GKLY…DYVE), and 1745–1787 (NKLY…TIMD). N1754 and N1816 each carry an N-linked (GlcNAc...) asparagine glycan. Residues 1834–1875 (GSNSCQLNNGGCSQLCLPTSETTRTCMCTVGYYLQKNRMSCQ) enclose the EGF-like 8 domain. Cystine bridges form between C1838–C1849, C1845–C1859, and C1861–C1874. N-linked (GlcNAc...) asparagine glycosylation is present at N1921. LDL-receptor class B repeat units lie at residues 1922–1964 (DTIY…DWIA), 1965–2007 (GNIY…HPEK), 2008–2051 (GLLF…DYEE), and 2052–2095 (NKLY…FGAY). N1983 is a glycosylation site (N-linked (GlcNAc...) asparagine). A glycan (N-linked (GlcNAc...) asparagine) is linked at N2105. The EGF-like 9 domain occupies 2143–2183 (GTNVCARDNGGCKQLCLYRGNSRRTCACAHGYLAEDGVTCL). 3 disulfides stabilise this stretch: C2147-C2158, C2154-C2168, and C2170-C2182. LDL-receptor class B repeat units follow at residues 2239-2280 (NRIF…HRAW), 2281-2329 (DTLY…DECQ), 2330-2374 (NLMF…DYRA), 2375-2416 (EKLY…VYDN), and 2417-2459 (YIFW…VAND). 3 N-linked (GlcNAc...) asparagine glycosylation sites follow: N2458, N2488, and N2507. Positions 2464-2504 (ELSPCALLNGGCHDLCLLTPNGRVNCSCRGDRILLEDNRCV) constitute an EGF-like 10 domain. Residues 2509-2548 (SCNAYSEFECGNGECIDYQLTCDGIPHCKDKSDEKLLYCE) form the LDL-receptor class A 11 domain. 3 disulfides stabilise this stretch: C2510-C2523, C2518-C2536, and C2530-C2547. N-linked (GlcNAc...) asparagine glycosylation occurs at N2549. 6 consecutive LDL-receptor class A domains span residues 2551–2587 (SCRR…LDCK), 2590–2626 (TCAT…KNCN), 2629–2675 (DCTH…LKCP), 2681–2717 (KCEE…FHCD), 2719–2757 (SCSW…SICG), and 2760–2800 (TCAA…AGCA). Disulfide bonds link C2552/C2564, C2559/C2577, C2571/C2586, C2591/C2603, C2598/C2616, and C2610/C2625. 2 N-linked (GlcNAc...) asparagine glycosylation sites follow: N2626 and N2647. Intrachain disulfides connect C2630/C2652, C2646/C2665, C2659/C2674, C2682/C2694, C2689/C2707, C2701/C2716, C2720/C2732, C2727/C2745, C2739/C2756, C2761/C2774, C2768/C2787, and C2781/C2799. The N-linked (GlcNAc...) asparagine glycan is linked to N2802. LDL-receptor class A domains lie at 2804–2841 (TCDE…PQCG), 2844–2885 (QCGT…PKCK), and 2890–2926 (SCNS…RNCH). 15 disulfides stabilise this stretch: C2805-C2817, C2812-C2830, C2824-C2840, C2845-C2857, C2852-C2871, C2865-C2884, C2891-C2903, C2898-C2916, C2910-C2925, C2930-C2942, C2938-C2951, C2953-C2966, C2972-C2982, C2978-C2991, and C2993-C3007. An N-linked (GlcNAc...) asparagine glycan is attached at N2892. Residues 2927–2967 (INECLSKKVSGCSQDCQDLPVSYKCKCWPGFQLKDDGKTCV) enclose the EGF-like 11 domain. The region spanning 2968–3008 (DIDECSSGFPCSQQCINTYGTYKCLCTDGYEIQPDNPNGCK) is the EGF-like 12; calcium-binding domain. 3 N-linked (GlcNAc...) asparagine glycosylation sites follow: N3034, N3066, and N3076. LDL-receptor class B repeat units lie at residues 3055–3098 (EFIY…DWIG), 3099–3141 (KNLY…DPQA), 3142–3185 (GYLY…DYVN), 3186–3224 (RRLY…TLFE), and 3225–3268 (DYIY…HSYR). N3164 is a glycosylation site (N-linked (GlcNAc...) asparagine). The region spanning 3273–3314 (SKHLCMINNGGCSHLCLLAPGKTHTCACPTNFYLAADNRTCL) is the EGF-like 13 domain. N3310 and N3316 each carry an N-linked (GlcNAc...) asparagine glycan. LDL-receptor class A domains are found at residues 3316–3353 (NCTA…DDCP), 3356–3392 (RCQP…LNCD), 3395–3432 (VCLS…RDCP), 3435–3472 (SCSP…ANCD), 3475–3511 (TCGP…ENCK), 3514–3550 (TCTL…RNCE), 3552–3588 (SCSK…KSCE), 3593–3629 (TCSS…MDCV), 3631–3668 (ECKE…ENCE), 3673–3711 (ICRA…DMCV), 3714–3752 (LCPS…DHCG), and 3761–3797 (PCKK…QGCR). Disulfide bonds link C3317-C3329, C3324-C3342, C3336-C3352, C3357-C3369, C3364-C3382, C3376-C3391, C3396-C3409, C3403-C3422, C3416-C3431, C3436-C3449, C3443-C3462, C3456-C3471, C3476-C3488, C3483-C3501, C3495-C3510, C3515-C3527, C3522-C3540, C3534-C3549, C3553-C3565, C3560-C3578, C3572-C3587, C3594-C3606, C3601-C3619, C3613-C3628, C3632-C3645, C3639-C3658, C3652-C3667, C3674-C3686, C3681-C3699, C3693-C3710, C3715-C3729, C3723-C3742, C3736-C3751, C3762-C3774, C3769-C3787, C3781-C3796, C3805-C3818, C3812-C3827, C3829-C3842, C3848-C3858, C3854-C3867, and C3869-C3880. The N-linked (GlcNAc...) asparagine glycan is linked to N3682. EGF-like domains lie at 3801 to 3843 (TEYT…RQCE) and 3844 to 3881 (DLNE…NTCI). 3 N-linked (GlcNAc...) asparagine glycosylation sites follow: N3877, N3894, and N3906. LDL-receptor class B repeat units lie at residues 3933 to 3980 (DMII…DWVA), 3981 to 4038 (GNIY…NPKR), 4039 to 4082 (GMMY…DYFS), and 4083 to 4127 (ERIY…FEDY). A glycan (N-linked (GlcNAc...) asparagine) is linked at N4017. EGF-like domains follow at residues 4171–4208 (DLPN…GTCN), 4213–4249 (LDDS…ERCE), 4249–4285 (EVNH…PNCG), 4285–4321 (GKTV…DRCQ), 4321–4357 (QYYV…PKCE), 4357–4392 (EVDK…SSCQ), and 4390–4427 (SCQL…TQCE). N-linked (GlcNAc...) asparagine glycosylation is present at N4204. Disulfide bonds link C4217–C4227, C4221–C4237, C4253–C4263, C4257–C4273, C4275–C4284, C4289–C4299, C4293–C4309, C4311–C4320, C4325–C4335, C4329–C4345, and C4347–C4356. N4381 is a glycosylation site (N-linked (GlcNAc...) asparagine). Intrachain disulfides connect C4394-C4404, C4398-C4415, and C4417-C4426. A glycan (N-linked (GlcNAc...) asparagine) is linked at N4420. The chain crosses the membrane as a helical span at residues 4445–4467 (AIIVPLVLLVTLITTLVIGLVLC). Topologically, residues 4468–4599 (KRKRRTKTIR…IEIGIRETVA (132 aa)) are cytoplasmic. 2 consecutive short sequence motifs (endocytosis signal) follow at residues 4492–4495 (NPSY) and 4559–4562 (NPVY).

The protein belongs to the LDLR family. Binds LRPAP1, PLAU, PLAT and SERPINE1; binding is followed by internalization and degradation of the ligands. As to expression, expressed in thyroid gland and in salivary gland, as well as in adult and fetal brain.

It is found in the membrane. Potential cell surface proteins that bind and internalize ligands in the process of receptor-mediated endocytosis. This is Low-density lipoprotein receptor-related protein 1B (LRP1B) from Homo sapiens (Human).